The primary structure comprises 153 residues: Prostaglandin E synthase (153 aa).

Residues 1 to 13 (MTSLGLVMENSQV) lie on the Lumenal side of the membrane. Residues 14–42 (LPAFLLCSTLLVIKMYAVAVITGQVRLRK) form a helical membrane-spanning segment. R39 contacts glutathione. At 43–61 (KAFANPEDALKRGGLQYCR) the chain is on the cytoplasmic side. A helical membrane pass occupies residues 62-91 (SDPDVERCLRAHRNDMETIYPFLFLGFVYS). 74–78 (RNDME) provides a ligand contact to glutathione. At 92-98 (FLGPNPL) the chain is on the lumenal side. The chain crosses the membrane as a helical span at residues 99–120 (IAWIHFLVVLTGRVVHTVAYLG). Residues H114 and Y118 each coordinate glutathione. The Cytoplasmic segment spans residues 121–124 (KMNP). A helical membrane pass occupies residues 125–153 (RIRSGAYVLAQFACFSMALQILWEVAHHL). 127-131 (RSGAY) is a glutathione binding site.

The protein belongs to the MAPEG family. Glutathione serves as cofactor.

It localises to the membrane. The protein resides in the cytoplasm. It is found in the perinuclear region. It catalyses the reaction prostaglandin H2 = prostaglandin E2. It carries out the reaction 2-glyceryl-prostaglandin H2 = 2-glyceryl-prostaglandin E2. The catalysed reaction is prostaglandin G2 = (15S)-15-hydroperoxy-prostaglandin E2. The enzyme catalyses 1-chloro-2,4-dinitrobenzene + glutathione = 2,4-dinitrophenyl-S-glutathione + chloride + H(+). It catalyses the reaction (5S)-hydroperoxy-(6E,8Z,11Z,14Z)-eicosatetraenoate + 2 glutathione = (5S)-hydroxy-(6E,8Z,11Z,14Z)-eicosatetraenoate + glutathione disulfide + H2O. It functions in the pathway lipid metabolism; prostaglandin biosynthesis. Activity is increased following LPS stimulation and down-regulated by the anti-inflammatory glucocorticoid dexamethasone. Functionally, terminal enzyme of the cyclooxygenase (COX)-2-mediated prostaglandin E2 (PGE2) biosynthetic pathway. Catalyzes the glutathione-dependent oxidoreduction of prostaglandin endoperoxide H2 (PGH2) to prostaglandin E2 (PGE2) in response to inflammatory stimuli. Plays a key role in inflammation response, fever and pain. Also catalyzes the oxidoreduction of endocannabinoids into prostaglandin glycerol esters and PGG2 into 15-hydroperoxy-PGE2. In addition, displays low glutathione transferase and glutathione-dependent peroxidase activities, toward 1-chloro-2,4-dinitrobenzene and 5-hydroperoxyicosatetraenoic acid (5-HPETE), respectively. This is Prostaglandin E synthase (Ptges) from Rattus norvegicus (Rat).